Reading from the N-terminus, the 538-residue chain is Anti-bacteriophage protein A (538 aa).

Interacts with AbpB.

Part of an antiviral system composed of AbpA and AbpB; when both are expressed from a plasmid they confer resistance to phages T2, T4, T7 and lambda but not RB32 or RB69. Resistance is temperature dependent, it can be seen at 30 degrees Celsius but not at 37 or 42 degrees Celsius. The system impairs phage but not bacterial DNA synthesis (shown for T4, T7 and lambda). Partially suppressed by mutations in T4 gene 41, a replicative helicase. The protein is Anti-bacteriophage protein A of Escherichia coli (strain K12).